Consider the following 510-residue polypeptide: Polyamine aminopropyltransferase 2 (510 aa).

Transmembrane regions (helical) follow at residues 6–26, 38–58, 74–94, 102–122, 140–160, and 165–185; these read ALLVLAVFVVASCGLAYELIA, ILQFSSIIGAYLFAMGIGSWV, LELLVGLFGGVSAAALFLLFA, LVLYALVTVIGVLVGMEIPLV, VLTFDYLGALAVSLLFPLVLA, and LVRTGFLFGLCNTAIAVWTLW. The region spanning 205-449 is the PABS domain; it reads AGMVGAALLA…GEWGFILAAP (245 aa). Positions 207 to 456 are spermidine synthase; that stretch reads MVGAALLAGF…AAPGRADFRP (250 aa). Gln244 provides a ligand contact to S-methyl-5'-thioadenosine. The spermidine site is built by His274 and Asp298. Residues Asp318 and 352–353 contribute to the S-methyl-5'-thioadenosine site; that span reads DA. Asp370 acts as the Proton acceptor in catalysis.

This sequence belongs to the spermidine/spermine synthase family. As to quaternary structure, homodimer or homotetramer.

The protein localises to the cell membrane. The catalysed reaction is S-adenosyl 3-(methylsulfanyl)propylamine + putrescine = S-methyl-5'-thioadenosine + spermidine + H(+). It participates in amine and polyamine biosynthesis; spermidine biosynthesis; spermidine from putrescine: step 1/1. Functionally, catalyzes the irreversible transfer of a propylamine group from the amino donor S-adenosylmethioninamine (decarboxy-AdoMet) to putrescine (1,4-diaminobutane) to yield spermidine. This Ralstonia nicotianae (strain ATCC BAA-1114 / GMI1000) (Ralstonia solanacearum) protein is Polyamine aminopropyltransferase 2.